The chain runs to 274 residues: Penicillin-insensitive murein endopeptidase (274 aa).

The N-terminal stretch at 1-19 (MNKTAIALLALLASSASLA) is a signal peptide. 3 cysteine pairs are disulfide-bonded: Cys44/Cys265, Cys187/Cys235, and Cys216/Cys223. Positions 110, 113, 120, 147, 150, and 211 each coordinate Zn(2+).

The protein belongs to the peptidase M74 family. Dimer. Requires Zn(2+) as cofactor.

Its subcellular location is the periplasm. Its function is as follows. Murein endopeptidase that cleaves the D-alanyl-meso-2,6-diamino-pimelyl amide bond that connects peptidoglycan strands. Likely plays a role in the removal of murein from the sacculus. The polypeptide is Penicillin-insensitive murein endopeptidase (Shigella sonnei (strain Ss046)).